A 434-amino-acid polypeptide reads, in one-letter code: Ribosomal protein uS12 methylthiotransferase RimO (434 aa).

Residues 2 to 112 (AKIGFVSLGC…VLEAVQEVLP (111 aa)) enclose the MTTase N-terminal domain. 6 residues coordinate [4Fe-4S] cluster: Cys11, Cys47, Cys76, Cys142, Cys146, and Cys149. The region spanning 128–365 (LTPRHYAYVK…LEVQARVSLR (238 aa)) is the Radical SAM core domain. The 67-residue stretch at 368–434 (QRFVGKTLEV…DTYDLHGVQA (67 aa)) folds into the TRAM domain.

The protein belongs to the methylthiotransferase family. RimO subfamily. It depends on [4Fe-4S] cluster as a cofactor.

It is found in the cytoplasm. The enzyme catalyses L-aspartate(89)-[ribosomal protein uS12]-hydrogen + (sulfur carrier)-SH + AH2 + 2 S-adenosyl-L-methionine = 3-methylsulfanyl-L-aspartate(89)-[ribosomal protein uS12]-hydrogen + (sulfur carrier)-H + 5'-deoxyadenosine + L-methionine + A + S-adenosyl-L-homocysteine + 2 H(+). Functionally, catalyzes the methylthiolation of an aspartic acid residue of ribosomal protein uS12. This Thermus thermophilus (strain ATCC BAA-163 / DSM 7039 / HB27) protein is Ribosomal protein uS12 methylthiotransferase RimO.